The primary structure comprises 369 residues: Endo-1,4-beta-xylanase A (369 aa).

The signal sequence occupies residues 1–20 (MRKLTQFCLGLMLLPIAAVA). Residues 21-367 (QNQPTMKDVL…KPVVKEIIKL (347 aa)) form the GH10 domain. The active-site Proton donor is the Glu-156. Glu-261 functions as the Nucleophile in the catalytic mechanism.

Belongs to the glycosyl hydrolase 10 (cellulase F) family.

The enzyme catalyses Endohydrolysis of (1-&gt;4)-beta-D-xylosidic linkages in xylans.. Its pathway is glycan degradation; xylan degradation. This is Endo-1,4-beta-xylanase A (xynA) from Xylanibacter ruminicola (Prevotella ruminicola).